Here is a 476-residue protein sequence, read N- to C-terminus: Protein transport protein Sec61 subunit alpha isoform 1 (476 aa).

At 1-33 (MGIKFLEVIKPFCVILPEIQKPERKIQFKEKVL) the chain is on the cytoplasmic side. Residues 34 to 53 (WTAITLFIFLVCCQIPLFGI) traverse the membrane as a helical segment. The Lumenal portion of the chain corresponds to 54 to 76 (MSSDSADPFYWMRVILASNRGTL). Residues 77–96 (MELGISPIVTSGLIMQLLAG) traverse the membrane as a helical segment. Topologically, residues 97 to 117 (AKIIEVGDTPKDRALFNGAQK) are cytoplasmic. The chain crosses the membrane as a helical span at residues 118-138 (LFGMTITIGQSIVYVMTGMYG). Over 139–144 (DPSEMG) the chain is Lumenal. A helical membrane pass occupies residues 145–165 (AGVCLLITIQLFVAGLIVLLL). Residues 166–172 (DELLQKG) are Cytoplasmic-facing. A helical membrane pass occupies residues 173–193 (YGLGSGISLFIATNICETIVW). Over 194 to 240 (KAFSPTTVNTGRGMEFEGAIIALFHLLATRTDKVRALREAFYRQNLP) the chain is Lumenal. Residues 241-261 (NLMNLIATIFVFAVVIYFQGF) traverse the membrane as a helical segment. The Cytoplasmic portion of the chain corresponds to 262 to 288 (RVDLPIKSARYRGQYNTYPIKLFYTSN). Residues 289-309 (IPIILQSALVSNLYVISQMLS) form a helical membrane-spanning segment. Over 310 to 354 (ARFSGNLLVSLLGTWSDTSSGGPARAYPVGGLCYYLSPPESFGSV) the chain is Lumenal. The helical transmembrane segment at 355-375 (LEDPVHAVVYIVFMLGSCAFF) threads the bilayer. Residues 376 to 420 (SKTWIEVSGSSAKDVAKQLKEQQMVMRGHRETSMVHELNRYIPTA) lie on the Cytoplasmic side of the membrane. Residues 421 to 441 (AAFGGLCIGALSVLADFLGAI) traverse the membrane as a helical segment. Residues 442 to 445 (GSGT) are Lumenal-facing. Residues 446 to 462 (GILLAVTIIYQYFEIFV) form a helical membrane-spanning segment. Topologically, residues 463 to 476 (KEQSEVGSMGALLF) are cytoplasmic.

Belongs to the SecY/SEC61-alpha family. The SEC61 channel-forming translocon complex consists of channel-forming core components SEC61A1, SEC61B and SEC61G and different auxiliary components such as SEC62 and SEC63. The SEC61 channel associates with the multi-pass translocon (MPT) complex.

The protein localises to the endoplasmic reticulum membrane. Its function is as follows. Component of SEC61 channel-forming translocon complex that mediates transport of signal peptide-containing precursor polypeptides across the endoplasmic reticulum (ER). Forms a ribosome receptor and a gated pore in the ER membrane, both functions required for cotranslational translocation of nascent polypeptides. May cooperate with auxiliary protein SEC62, SEC63 and HSPA5/BiP to enable post-translational transport of small presecretory proteins. The SEC61 channel is also involved in ER membrane insertion of transmembrane proteins: it mediates membrane insertion of the first few transmembrane segments of proteins, while insertion of subsequent transmembrane regions of multi-pass membrane proteins is mediated by the multi-pass translocon (MPT) complex. The SEC61 channel cooperates with the translocating protein TRAM1 to import nascent proteins into the ER. Controls the passive efflux of calcium ions from the ER lumen to the cytosol through SEC61 channel, contributing to the maintenance of cellular calcium homeostasis. Plays a critical role in nephrogenesis, specifically at pronephros stage. This is Protein transport protein Sec61 subunit alpha isoform 1 (SEC61A1) from Bos taurus (Bovine).